Reading from the N-terminus, the 112-residue chain is Small ribosomal subunit protein bS6 (112 aa).

Belongs to the bacterial ribosomal protein bS6 family.

Its function is as follows. Binds together with bS18 to 16S ribosomal RNA. In Chlamydia trachomatis serovar L2 (strain ATCC VR-902B / DSM 19102 / 434/Bu), this protein is Small ribosomal subunit protein bS6.